Here is a 338-residue protein sequence, read N- to C-terminus: Clavatol oxidase claD (338 aa).

The Fe2OG dioxygenase domain maps to 193–299; that stretch reads DPMSLLRLLH…RYSVVFFYDG (107 aa). Residues His-222, Asp-224, and His-280 each coordinate Fe cation. Arg-290 contacts 2-oxoglutarate.

The protein belongs to the iron/ascorbate-dependent oxidoreductase family. The cofactor is Fe(2+).

The enzyme catalyses clavatol + 2-oxoglutarate + O2 = hydroxyclavatol + succinate + CO2. Its pathway is secondary metabolite biosynthesis. Its function is as follows. 2-oxoglutarate-dependent dioxygenase; part of the cla gene cluster that produces clavatol and ortho-quinone methide. The clavatol biosynthesis cluster cla and the terrestric acid cluster tra are both involved in the production of peniphenones and penilactones. The non-reducing PKS claF is responsible for the formation of clavatol from successive condensations of 3 malonyl-CoA units, presumably with a simple acetyl-CoA starter unit, and 2 methylation steps. The esterase claE probably collaborates with claF by catalyzing the hydrolysis of ACP-bound acyl intermediates to free the ACP from stalled intermediates. The clavatol oxidase claD then converts clavatol to hydroxyclavatol. Spontaneous dehydration of hydroxyclavatol leads to the accumulation of the highly active ortho-quinone methide. On the other hand, the PKS-NRPS hybrid traA is involved in the formation of crustosic acid, with the help of traB and traD. The polyketide synthase module (PKS) of traA is responsible for the synthesis of the polyketide backbone via the condensation of an acetyl-CoA starter unit with 3 malonyl-CoA units. The downstream nonribosomal peptide synthetase (NRPS) module then amidates the carboxyl end of the polyketide with L-malic acid. Because traA lacks a designated enoylreductase (ER) domain, the required activity is provided the enoyl reductase traG. Crustosic acid undergoes decarboxylation and isomerization to the terrestric acid, catalyzed by the 2-oxoglutarate-dependent dioxygenase traH. Both acids are further converted to the 2 gamma-butyrolactones (R)-5-methyltetronic acid and (S)-5-carboxylmethyltetronic acid, with involvement of the cytochrome P450 monooxygenase claJ. Spontaneous addition of the methide to these gamma-butyrolactones leads to peniphenone D and penilactone D, which undergo again stereospecific attacking by methide to give penilactones A and B. The chain is Clavatol oxidase claD from Penicillium crustosum (Blue mold fungus).